We begin with the raw amino-acid sequence, 102 residues long: Mitochondrial import inner membrane translocase subunit TIM10 (102 aa).

The short motif at 42 to 72 (CHTKCISSTPLNHRYAEGDLLKGESVCIDRC) is the Twin CX3C motif element. 2 disulfides stabilise this stretch: cysteine 42–cysteine 72 and cysteine 46–cysteine 68.

The protein belongs to the small Tim family. Heterohexamer; composed of 3 copies of TIM9 and 3 copies of TIM10, named soluble 70 kDa complex. Associates directly with the TIM22 complex, whose core is composed of TIM22 and TIM54. Interacts with the transmembrane regions of multi-pass transmembrane proteins in transit.

It is found in the mitochondrion inner membrane. In terms of biological role, mitochondrial intermembrane chaperone that participates in the import and insertion of multi-pass transmembrane proteins into the mitochondrial inner membrane. Also required for the transfer of beta-barrel precursors from the TOM complex to the sorting and assembly machinery (SAM complex) of the outer membrane. Acts as a chaperone-like protein that protects the hydrophobic precursors from aggregation and guide them through the mitochondrial intermembrane space. In Cryptococcus neoformans var. neoformans serotype D (strain B-3501A) (Filobasidiella neoformans), this protein is Mitochondrial import inner membrane translocase subunit TIM10 (TIM10).